The primary structure comprises 108 residues: uncharacterized protein (108 aa).

The protein to M.jannaschii MJ1245 and M.thermoautotrophicum MTH1110.

This is an uncharacterized protein from Methanocaldococcus jannaschii (strain ATCC 43067 / DSM 2661 / JAL-1 / JCM 10045 / NBRC 100440) (Methanococcus jannaschii).